A 161-amino-acid polypeptide reads, in one-letter code: Putative allophycocyanin subunit alpha 2 (161 aa).

Asn71 carries the post-translational modification N4-methylasparagine. Cys81 lines the (2R,3E)-phycocyanobilin pocket.

It belongs to the phycobiliprotein family. In terms of assembly, heterohexamer of two alpha chains, one alpha-B chain and three beta chains. In terms of processing, contains one covalently linked phycocyanobilin chromophore. The chromophore is added by phycocyanobilin lyase CpcS 1.

It localises to the cellular thylakoid membrane. In terms of biological role, light-harvesting photosynthetic bile pigment-protein from the phycobiliprotein complex. Allophycocyanin has a maximum absorption at approximately 650 to 653 nanometers. The polypeptide is Putative allophycocyanin subunit alpha 2 (apcA2) (Nostoc sp. (strain PCC 7120 / SAG 25.82 / UTEX 2576)).